The sequence spans 398 residues: Fatty-acid-binding protein 2 (398 aa).

Dodecanoate contacts are provided by Arg-222, Tyr-235, and Ser-302.

This sequence belongs to the chalcone isomerase family. As to expression, expressed in developing cotyledons, young seedlings, roots, seeds, embryos, macrospores, preanthesis and tapetum. Restricted to developing and reproductive tissues.

The protein localises to the plastid. It is found in the chloroplast stroma. In terms of biological role, fatty-acid-binding protein. Associates with saturated fatty acid. This chain is Fatty-acid-binding protein 2 (FAP2), found in Arabidopsis thaliana (Mouse-ear cress).